The chain runs to 952 residues: Bromodomain testis-specific protein (952 aa).

In terms of domain architecture, Bromo 1 spans 26-132; that stretch reads RLTNQLQFLQ…KLFMQKLSQM (107 aa). Residues 141–150 are compositionally biased toward basic and acidic residues; sequence GKERMKKDIQ. The segment at 141 to 168 is disordered; it reads GKERMKKDIQQKTAVSSAKEQTPSKSAE. Residues 151 to 167 are compositionally biased toward polar residues; that stretch reads QKTAVSSAKEQTPSKSA. A Phosphoserine modification is found at S186. A Nuclear localization signal motif is present at residues 208 to 219; sequence KGVKRRADTTTP. A disordered region spans residues 209 to 257; sequence GVKRRADTTTPTTSSAKASSESPPPLREAKPANAPVKENTVKSVLPDSQ. Residues 216–229 are compositionally biased toward low complexity; it reads TTTPTTSSAKASSE. A Bromo 2 domain is found at 266-375; sequence VKVTEQLKHC…DVFEMHFAKI (110 aa). Disordered regions lie at residues 392–420, 442–504, 607–746, and 850–930; these read SAKA…ERVQ, VPLR…NAKP, QLNC…GCQV, and KHLE…RREA. Positions 417–442 form a coiled coil; it reads ERVQRLAKLQEQLNAVHQQLQVLSQV. Positions 445–463 are enriched in basic residues; that stretch reads RKLKKKNEKSKRAPKRKKV. An NET domain is found at 495-577; it reads KLEEEDNAKP…ACLRKRSLKP (83 aa). A compositionally biased stretch (basic residues) spans 610-619; that stretch reads CRKRQTKRPA. Positions 625 to 638 are enriched in pro residues; sequence PRPPLPPPPPPPPE. A compositionally biased stretch (low complexity) spans 646–681; that stretch reads SDSSSSSSSSGSGSSSSSSSSSGSGSSSSDSSSSDS. A compositionally biased stretch (polar residues) spans 718 to 729; that stretch reads SAETALVQQSTG. Positions 837-936 form a coiled coil; sequence EKEVKARTQE…RREAMAGTID (100 aa). Over residues 850 to 867 the composition is skewed to basic and acidic residues; the sequence is KHLEHSAKDPKVSQESQR. Over residues 874-883 the composition is skewed to polar residues; sequence TPESSSNKVQ. The span at 893 to 902 shows a compositional bias: low complexity; it reads EQQQLPSPSE. Positions 911–930 are enriched in basic and acidic residues; it reads LLKDRNLAREKEQERRRREA.

Belongs to the BET family. As to quaternary structure, interacts with the acetylated N-terminus of histone H1, H2, H3 and H4. Interacts with P-TEFb components CDK9 and CCNT1/cyclin-T1. Interacts with mRNA splicing machinery proteins SRSF2, DDX5, HNRNPK and TARDBP. Interacts with SMARCE1. In terms of processing, ubiquitinated in a SPOP-dependent manner, leading to proteasomal degradation.

The protein resides in the nucleus. Functionally, testis-specific chromatin protein that specifically binds histone H4 acetylated at 'Lys-5' and 'Lys-8' (H4K5ac and H4K8ac, respectively) and plays a key role in spermatogenesis. Required in late pachytene spermatocytes: plays a role in meiotic and post-meiotic cells by binding to acetylated histones at the promoter of specific meiotic and post-meiotic genes, facilitating their activation at the appropriate time. In the post-meiotic phase of spermatogenesis, binds to hyperacetylated histones and participates in their general removal from DNA. Also recognizes and binds a subset of butyrylated histones: able to bind histone H4 butyrylated at 'Lys-8' (H4K8ac), while it is not able to bind H4 butyrylated at 'Lys-5' (H4K5ac). Also acts as a component of the splicing machinery in pachytene spermatocytes and round spermatids and participates in 3'-UTR truncation of specific mRNAs in post-meiotic spermatids. Required for chromocenter organization, a structure comprised of peri-centromeric heterochromatin. The chain is Bromodomain testis-specific protein (Brdt) from Rattus norvegicus (Rat).